The primary structure comprises 198 residues: Recombination protein RecR (198 aa).

The C4-type zinc-finger motif lies at 57–72 (CEKCNTFTEAQICEVC). A Toprim domain is found at 80 to 175 (TLLCVVETPA…AVTRLARGVP (96 aa)).

It belongs to the RecR family.

In terms of biological role, may play a role in DNA repair. It seems to be involved in an RecBC-independent recombinational process of DNA repair. It may act with RecF and RecO. The polypeptide is Recombination protein RecR (Burkholderia ambifaria (strain MC40-6)).